The following is a 407-amino-acid chain: Putative serine/threonine-protein kinase C01C4.3 (407 aa).

A compositionally biased stretch (polar residues) spans 33 to 57 (NQLQNHPPRNATQSPQRQPRTSESS). Residues 33–68 (NQLQNHPPRNATQSPQRQPRTSESSMDFPRSALRRN) are disordered. Residues 126–397 (YTVNKQLGTG…RKCLAKEKLL (272 aa)) enclose the Protein kinase domain. Residues 132 to 140 (LGTGRFGFI) and Lys-155 each bind ATP. Asn-251 serves as the catalytic Proton acceptor.

It belongs to the protein kinase superfamily. Ser/Thr protein kinase family.

It carries out the reaction L-seryl-[protein] + ATP = O-phospho-L-seryl-[protein] + ADP + H(+). The catalysed reaction is L-threonyl-[protein] + ATP = O-phospho-L-threonyl-[protein] + ADP + H(+). This chain is Putative serine/threonine-protein kinase C01C4.3, found in Caenorhabditis elegans.